Reading from the N-terminus, the 202-residue chain is Recoverin (202 aa).

Residue G2 is the site of N-myristoyl glycine attachment. The residue at position 39 (C39) is a Cysteine sulfenic acid (-SOH). EF-hand domains lie at S41–E59, D61–G96, K97–M132, and T147–I182. Ca(2+) is bound by residues D74, N76, D78, T80, E85, D110, D112, N114, and E121. Positions E189 to K192 are interaction with GRK1.

It belongs to the recoverin family. Homodimer; disulfide-linked. Homodimerization is caused by prolonged intense illumination. May form a complex composed of RHO, GRK1 and RCVRN in a Ca(2+)-dependent manner; RCVRN prevents the interaction between GRK1 and RHO. Interacts (via C-terminus) with GRK1 (via N-terminus); the interaction is Ca(2+)-dependent. Post-translationally, the N-terminal glycine is linked to one of four different types of acyl groups. The most abundant is myristoleate (14:1), but 14:0, 14:2, and 12:0 acyl residues are also present. The Ca(2+) induced exposure of the myristoyl group, known as the calcium-myristoyl switch, promotes RCVRN binding to the photoreceptor cell membranes only when intracellular Ca(2+) concentration is high. In terms of processing, oxidation on Cys-39 occurs in response to prolonged intense illumination and results in the formation of disulfide homodimers, and to a lesser extent disulfide-linked heterodimers.

The protein localises to the photoreceptor inner segment. It is found in the cell projection. It localises to the cilium. The protein resides in the photoreceptor outer segment. Its subcellular location is the photoreceptor outer segment membrane. The protein localises to the perikaryon. Acts as a calcium sensor and regulates phototransduction of cone and rod photoreceptor cells. Modulates light sensitivity of cone photoreceptor in dark and dim conditions. In response to high Ca(2+) levels induced by low light levels, prolongs RHO/rhodopsin activation in rod photoreceptor cells by binding to and inhibiting GRK1-mediated phosphorylation of RHO/rhodopsin. Plays a role in scotopic vision/enhances vision in dim light by enhancing signal transfer between rod photoreceptors and rod bipolar cells. Improves rod photoreceptor sensitivity in dim light and mediates response of rod photoreceptors to facilitate detection of change and motion in bright light. This Canis lupus familiaris (Dog) protein is Recoverin (RCVRN).